The following is an 835-amino-acid chain: Protein bicaudal D homolog 1 (835 aa).

Positions 1–264 form a coiled coil; sequence MAAEEALKTV…YINLSDSHIS (264 aa). Positions 278-297 are disordered; that stretch reads EPNNDDKMNGHIHGPLGKLN. The stretch at 320 to 519 forms a coiled coil; it reads ELNISEIQKL…TFSEELAQLY (200 aa). Disordered regions lie at residues 545–616 and 800–835; these read RSGS…LDTS and DHEQSRRSKGKLGKSKIGSPKIVSSLLPPYRHSAHN. Positions 557–572 are enriched in low complexity; sequence GLLSPRLSRRGVSSPV. Basic and acidic residues predominate over residues 581–590; sequence VSKENTETSK. Over residues 591–604 the composition is skewed to low complexity; the sequence is EPSPTKTPTISPVI. Positions 663-803 form a coiled coil; it reads IDKDKEALME…LEDLEFDHEQ (141 aa). The segment at 663–803 is interaction with RAB6A; the sequence is IDKDKEALME…LEDLEFDHEQ (141 aa).

Belongs to the BicD family. As to quaternary structure, interacts with RAB6A. Interacts (via C-terminus) with RAB6B (GTP-bound); the interaction is direct. Interacts with CLIP-115 and KIFC2. As to expression, expressed in the brain, heart and skeletal muscle.

It is found in the golgi apparatus. Regulates coat complex coatomer protein I (COPI)-independent Golgi-endoplasmic reticulum transport by recruiting the dynein-dynactin motor complex. The sequence is that of Protein bicaudal D homolog 1 (Bicd1) from Mus musculus (Mouse).